A 307-amino-acid polypeptide reads, in one-letter code: Elongation factor Ts (307 aa).

The interval 79–82 (TDFV) is involved in Mg(2+) ion dislocation from EF-Tu.

This sequence belongs to the EF-Ts family.

It is found in the cytoplasm. Associates with the EF-Tu.GDP complex and induces the exchange of GDP to GTP. It remains bound to the aminoacyl-tRNA.EF-Tu.GTP complex up to the GTP hydrolysis stage on the ribosome. This is Elongation factor Ts from Bartonella henselae (strain ATCC 49882 / DSM 28221 / CCUG 30454 / Houston 1) (Rochalimaea henselae).